A 254-amino-acid chain; its full sequence is 5'-nucleotidase SurE (254 aa).

Residues Asp8, Asp9, Ser40, and Asn93 each contribute to the a divalent metal cation site.

It belongs to the SurE nucleotidase family. Requires a divalent metal cation as cofactor.

The protein localises to the cytoplasm. It carries out the reaction a ribonucleoside 5'-phosphate + H2O = a ribonucleoside + phosphate. Nucleotidase that shows phosphatase activity on nucleoside 5'-monophosphates. The protein is 5'-nucleotidase SurE of Methylobacterium radiotolerans (strain ATCC 27329 / DSM 1819 / JCM 2831 / NBRC 15690 / NCIMB 10815 / 0-1).